Here is a 285-residue protein sequence, read N- to C-terminus: Probable fructose-bisphosphate aldolase (285 aa).

Residue Ser-50 coordinates D-glyceraldehyde 3-phosphate. Residue Asp-85 is the Proton donor of the active site. Residues His-86, Asp-107, Glu-137, and His-181 each coordinate Zn(2+). Position 182 (Gly-182) interacts with dihydroxyacetone phosphate. Residue His-209 participates in Zn(2+) binding. Dihydroxyacetone phosphate contacts are provided by residues Gly-210 to Thr-212 and Asn-231 to Thr-234. Phosphothreonine occurs at positions 212 and 234.

It belongs to the class II fructose-bisphosphate aldolase family. The cofactor is Zn(2+). Phosphorylated during sporulation.

It catalyses the reaction beta-D-fructose 1,6-bisphosphate = D-glyceraldehyde 3-phosphate + dihydroxyacetone phosphate. It participates in carbohydrate degradation; glycolysis; D-glyceraldehyde 3-phosphate and glycerone phosphate from D-glucose: step 4/4. Catalyzes the aldol condensation of dihydroxyacetone phosphate (DHAP or glycerone-phosphate) with glyceraldehyde 3-phosphate (G3P) to form fructose 1,6-bisphosphate (FBP) in gluconeogenesis and the reverse reaction in glycolysis. The sequence is that of Probable fructose-bisphosphate aldolase (fbaA) from Bacillus subtilis (strain 168).